A 329-amino-acid chain; its full sequence is DNA-directed RNA polymerase subunit alpha (329 aa).

The interval 1 to 235 (MQNSIMDFLR…EQLEAFVDLR (235 aa)) is alpha N-terminal domain (alpha-NTD). Residues 249–329 (FEPILLRPVD…NWPPSSILDE (81 aa)) form an alpha C-terminal domain (alpha-CTD) region.

It belongs to the RNA polymerase alpha chain family. Homodimer. The RNAP catalytic core consists of 2 alpha, 1 beta, 1 beta' and 1 omega subunit. When a sigma factor is associated with the core the holoenzyme is formed, which can initiate transcription.

It catalyses the reaction RNA(n) + a ribonucleoside 5'-triphosphate = RNA(n+1) + diphosphate. In terms of biological role, DNA-dependent RNA polymerase catalyzes the transcription of DNA into RNA using the four ribonucleoside triphosphates as substrates. The protein is DNA-directed RNA polymerase subunit alpha of Buchnera aphidicola subsp. Acyrthosiphon pisum (strain APS) (Acyrthosiphon pisum symbiotic bacterium).